A 477-amino-acid polypeptide reads, in one-letter code: Octopamine receptor (477 aa).

Topologically, residues 1 to 55 (MGQAATHVDANYTLINYTEEVIEDDRDACAVADDPKYPSSFGITLAVPEWEAICT) are extracellular. Residues Asn11 and Asn16 are each glycosylated (N-linked (GlcNAc...) asparagine). A helical transmembrane segment spans residues 56–78 (AIVLTLIIISTIVGNILVILSVF). The Cytoplasmic segment spans residues 79–88 (TYKPLRIVQN). The chain crosses the membrane as a helical span at residues 89–110 (FFIVSLAVADLTVAILVLPLNV). Residues 111–127 (AYSILGQWVFGIYVCKM) lie on the Extracellular side of the membrane. The helical transmembrane segment at 128–148 (WLTCDIMCCTSSILNLCAIAL) threads the bilayer. The Cytoplasmic segment spans residues 149–168 (DRYWAITDPINYAQKRTLER). A helical membrane pass occupies residues 169–191 (VLLMIGVVWVLSLIISSPPLLGW). The Extracellular segment spans residues 192–216 (NDWPDVFEPDTPCRLTSQPGFVIFS). The helical transmembrane segment at 217–238 (SSGSFYIPLVIMTVVYFEIYLA) threads the bilayer. Topologically, residues 239–405 (TKKRLRDRAK…LTRERRAART (167 aa)) are cytoplasmic. Disordered stretches follow at residues 256–317 (SSGQ…SKDD) and 334–358 (VTDM…THED). Basic and acidic residues-rich tracts occupy residues 263–272 (NNKDDHHDQD) and 279–295 (NHNE…DNEK). Basic residues predominate over residues 296–312 (KKRTRKLTPKKKPKRKY). A helical membrane pass occupies residues 406 to 427 (LGIIMGVFVVCWLPFFVIYLVI). Topologically, residues 428–439 (PFCASCCLSNKF) are extracellular. Residues 440 to 460 (INFITWLGYCNSALNPLIYTI) form a helical membrane-spanning segment. Over 461-477 (FNMDFRRAFKKLLCMKP) the chain is Cytoplasmic.

Belongs to the G-protein coupled receptor 1 family.

The protein localises to the cell membrane. Receptor for octopamine. Octopamine (OA) is a neurotransmitter, neurohormone, and neuromodulator in invertebrates. The activity of this receptor is mediated by G proteins which activate adenylyl cyclase. This Heliothis virescens (Tobacco budworm moth) protein is Octopamine receptor.